Reading from the N-terminus, the 382-residue chain is Homoserine O-acetyltransferase (382 aa).

An AB hydrolase-1 domain is found at 52–356 (NVVMVLHALT…TYGHDGFLVE (305 aa)). Serine 157 functions as the Nucleophile in the catalytic mechanism. Arginine 227 is a substrate binding site. Catalysis depends on residues aspartate 320 and histidine 350. Aspartate 351 provides a ligand contact to substrate.

The protein belongs to the AB hydrolase superfamily. MetX family. In terms of assembly, homodimer.

The protein resides in the cytoplasm. It carries out the reaction L-homoserine + acetyl-CoA = O-acetyl-L-homoserine + CoA. It functions in the pathway amino-acid biosynthesis; L-methionine biosynthesis via de novo pathway; O-acetyl-L-homoserine from L-homoserine: step 1/1. In terms of biological role, transfers an acetyl group from acetyl-CoA to L-homoserine, forming acetyl-L-homoserine. The polypeptide is Homoserine O-acetyltransferase (Mycobacterium leprae (strain TN)).